A 178-amino-acid polypeptide reads, in one-letter code: Interleukin-10 (178 aa).

The signal sequence occupies residues 1-18; the sequence is MHSSALLCCLVLLTGVRA. Intrachain disulfides connect C30-C126 and C80-C132. N-linked (GlcNAc...) asparagine glycosylation occurs at N134.

Belongs to the IL-10 family. In terms of assembly, homodimer. Interacts with IL10RA and IL10RB.

Its subcellular location is the secreted. Functionally, major immune regulatory cytokine that acts on many cells of the immune system where it has profound anti-inflammatory functions, limiting excessive tissue disruption caused by inflammation. Mechanistically, IL10 binds to its heterotetrameric receptor comprising IL10RA and IL10RB leading to JAK1 and STAT2-mediated phosphorylation of STAT3. In turn, STAT3 translocates to the nucleus where it drives expression of anti-inflammatory mediators. Targets antigen-presenting cells (APCs) such as macrophages and monocytes and inhibits their release of pro-inflammatory cytokines including granulocyte-macrophage colony-stimulating factor /GM-CSF, granulocyte colony-stimulating factor/G-CSF, IL-1 alpha, IL-1 beta, IL-6, IL-8 and TNF-alpha. Also interferes with antigen presentation by reducing the expression of MHC-class II and co-stimulatory molecules, thereby inhibiting their ability to induce T cell activation. In addition, controls the inflammatory response of macrophages by reprogramming essential metabolic pathways including mTOR signaling. This is Interleukin-10 (IL10) from Macaca mulatta (Rhesus macaque).